A 447-amino-acid chain; its full sequence is METSQITETINMVSEEHLDIRTVTMGISLLDTVAGTPQETAKNIYHKITTYAKNLVAVAQQIEREFGIPITNKRISVTPIALIAGKATPDDMLYYAHALDDAAKAVGVDFIGGYSALVQKGFANGDLALIKSMPRALTETDLVMSSVNIGSSKAGINLDAVKLMGETIKAITDKSDTANAKLVVFANAVEDNPFMAGAFHGVTEADVVINVGVSGPGVVKRALEKVKGEPIQIVAETVKKTAFKITRVGQMVGALAAERLGVEFGIVDLSLAPTPARGDSVAEVLEEIGLEMVGTHGTTAALMLLNDAVKKGGVMASQRVGGLSGAFIPVSEDAGMIDAVEAGILSLAKLEAMTSVCSVGLDMIAVPGDTEATTISAMIADEAAIGVQNNKTTAVRILPTNGTKVGDMVDYGGLLGTAPVMPVVPKSSADFINRGGHIPAPIHSFKN.

The protein belongs to the UPF0210 family. As to quaternary structure, homodimer.

The polypeptide is UPF0210 protein LCK_00974 (Leuconostoc citreum (strain KM20)).